The primary structure comprises 427 residues: Putative tyrosine recombinase XerC (427 aa).

The Core-binding (CB) domain maps to 1–81 (MTPQQLTEEY…HLRTIWGYAI (81 aa)). Residues 116–305 (RARSWLSMQV…DYDHMRAVLH (190 aa)) enclose the Tyr recombinase domain. Residues arginine 156, lysine 183, histidine 256, arginine 259, and histidine 283 contribute to the active site. The active-site O-(3'-phospho-DNA)-tyrosine intermediate is tyrosine 292. Disordered regions lie at residues 323–384 (SGSP…PPDT) and 401–427 (RAAT…DSLA). The segment covering 350–362 (ARTEPSEPREHTQ) has biased composition (basic and acidic residues). The span at 402 to 413 (AATASAVPAATS) shows a compositional bias: low complexity.

It belongs to the 'phage' integrase family.

Its subcellular location is the cytoplasm. Its function is as follows. Site-specific tyrosine recombinase, which acts by catalyzing the cutting and rejoining of the recombining DNA molecules. This is Putative tyrosine recombinase XerC from Pseudomonas aeruginosa.